A 105-amino-acid chain; its full sequence is Large ribosomal subunit protein uL24 (105 aa).

It belongs to the universal ribosomal protein uL24 family. As to quaternary structure, part of the 50S ribosomal subunit.

Its function is as follows. One of two assembly initiator proteins, it binds directly to the 5'-end of the 23S rRNA, where it nucleates assembly of the 50S subunit. In terms of biological role, one of the proteins that surrounds the polypeptide exit tunnel on the outside of the subunit. This chain is Large ribosomal subunit protein uL24, found in Mycobacterium tuberculosis (strain CDC 1551 / Oshkosh).